Reading from the N-terminus, the 1498-residue chain is Rap guanine nucleotide exchange factor 2 (1498 aa).

Disordered stretches follow at residues 40 to 59 and 68 to 101; these read HVSS…SSSL and SEAG…SDPL. Residues 83–94 show a composition bias toward acidic residues; sequence VDSEDDDDEEDI. A nucleoside 3',5'-cyclic phosphate is bound at residue 135–252; sequence AFANMTMSVR…QKVEEEGEIV (118 aa). Residues 267 to 380 form the N-terminal Ras-GEF domain; sequence KGHIVIKGTS…RLLNIACAAK (114 aa). Residues 385 to 468 form the PDZ domain; it reads LMTLTKPSRE…LSITVKTNLF (84 aa). Phosphoserine is present on Ser501. The Ras-associating domain occupies 606-692; sequence PDQVLRVFKA…GRYYLKNNME (87 aa). Residue Thr644 is modified to Phosphothreonine. Residues 717–944 form the Ras-GEF domain; sequence STVEVATQLS…SQGSTNATVL (228 aa). Phosphoserine occurs at positions 806, 930, 933, 1022, 1079, 1088, 1094, 1115, 1119, 1158, and 1175. Positions 1002–1048 are disordered; that stretch reads PATNTLPKNPGDKKPVKSETSPVAPRAGSQQKAQAQPPPPQPQPQHK. The tract at residues 1094–1159 is disordered; the sequence is SLERHKKQAE…RSSIVSNSSF (66 aa). Composition is skewed to low complexity over residues 1110 to 1124 and 1140 to 1159; these read SSQL…QSSP and SDSG…NSSF. Disordered stretches follow at residues 1224 to 1257, 1304 to 1371, and 1392 to 1498; these read STEE…GSHD, TKYN…TKPV, and EGRY…VSAV. Polar residues-rich tracts occupy residues 1246–1257 and 1306–1330; these read GSWTSCSSGSHD and YNRQ…SSTG. Over residues 1354–1365 the composition is skewed to low complexity; sequence EAESSSVTSVTT. Over residues 1487–1498 the composition is skewed to acidic residues; the sequence is TEEDEDEQVSAV.

This sequence belongs to the RAPGEF2 family. Found in a complex, at least composed of KIDINS220, MAGI2, NTRK1 and RAPGEF2; the complex is mainly formed at late endosomes in a neuronal growth factor (NGF)-dependent manner. Interacts (via C-terminal domain) with NEDD4 (via WW domains); this interaction leads to ubiquitination and degradation via the proteasome pathway in a cAMP-independent manner. Interacts with MAGI1 (via PDZ domain). Interacts with ADRB1 (via C-terminal PDZ motif); the interaction is direct. Interacts (via Ras-associating domain) with RAP1A (via GTP-bound active form). Interacts weakly with HRAS (via GDP- and GTP-bound forms). Interacts (via C-terminal domain) with MAGI2 (via PDZ and WW domains). Interacts with CDH1, CTNNB1 and TJP1. Post-translationally, ubiquitinated by NEDD4, leading to proteasomal degradation. In terms of processing, phosphorylation by PLK2 promotes its activity.

The protein localises to the cell junction. Its subcellular location is the cytoplasm. It localises to the perinuclear region. It is found in the cell membrane. The protein resides in the late endosome. Functions as a guanine nucleotide exchange factor (GEF), which activates Rap and Ras family of small GTPases by exchanging bound GDP for free GTP in a cAMP-dependent manner. Serves as a link between cell surface receptors and Rap/Ras GTPases in intracellular signaling cascades. Also acts as an effector for Rap1 by direct association with Rap1-GTP thereby leading to the amplification of Rap1-mediated signaling. Shows weak activity on HRAS. It is controversial whether RAPGEF2 binds cAMP and cGMP or not. Its binding to ligand-activated beta-1 adrenergic receptor ADRB1 leads to the Ras activation through the G(s)-alpha signaling pathway. Involved in the cAMP-induced Ras and Erk1/2 signaling pathway that leads to sustained inhibition of long term melanogenesis by reducing dendrite extension and melanin synthesis. Also provides inhibitory signals for cell proliferation of melanoma cells and promotes their apoptosis in a cAMP-independent nanner. Regulates cAMP-induced neuritogenesis by mediating the Rap1/B-Raf/ERK signaling through a pathway that is independent on both PKA and RAPGEF3/RAPGEF4. Involved in neuron migration and in the formation of the major forebrain fiber connections forming the corpus callosum, the anterior commissure and the hippocampal commissure during brain development. Involved in neuronal growth factor (NGF)-induced sustained activation of Rap1 at late endosomes and in brain-derived neurotrophic factor (BDNF)-induced axon outgrowth of hippocampal neurons. Plays a role in the regulation of embryonic blood vessel formation and in the establishment of basal junction integrity and endothelial barrier function. May be involved in the regulation of the vascular endothelial growth factor receptor KDR and cadherin CDH5 expression at allantois endothelial cell-cell junctions. This chain is Rap guanine nucleotide exchange factor 2 (RAPGEF2), found in Canis lupus familiaris (Dog).